Here is a 429-residue protein sequence, read N- to C-terminus: DNA polymerase delta small subunit (429 aa).

It belongs to the DNA polymerase delta/II small subunit family. As to quaternary structure, heterodimer with subunits of 125 kDa and 50 kDa.

Its subcellular location is the nucleus. It carries out the reaction DNA(n) + a 2'-deoxyribonucleoside 5'-triphosphate = DNA(n+1) + diphosphate. The function of the small subunit is not yet clear. This is DNA polymerase delta small subunit (POLD2) from Oryza sativa subsp. japonica (Rice).